Consider the following 275-residue polypeptide: Large ribosomal subunit protein uL2 (275 aa).

A disordered region spans residues 220-275; it reads QTRGAAMNPVDHPHGGGEGKTGSSGHPVSPWGMPAKGFKTRKKKASDKLIISRRKK. Residues 257–275 are compositionally biased toward basic residues; that stretch reads FKTRKKKASDKLIISRRKK.

It belongs to the universal ribosomal protein uL2 family. As to quaternary structure, part of the 50S ribosomal subunit. Forms a bridge to the 30S subunit in the 70S ribosome.

One of the primary rRNA binding proteins. Required for association of the 30S and 50S subunits to form the 70S ribosome, for tRNA binding and peptide bond formation. It has been suggested to have peptidyltransferase activity; this is somewhat controversial. Makes several contacts with the 16S rRNA in the 70S ribosome. In Wolinella succinogenes (strain ATCC 29543 / DSM 1740 / CCUG 13145 / JCM 31913 / LMG 7466 / NCTC 11488 / FDC 602W) (Vibrio succinogenes), this protein is Large ribosomal subunit protein uL2.